The following is a 396-amino-acid chain: Phosphoglycerate kinase (396 aa).

Residues 22-24 (DLN), Arg37, 60-63 (HFGR), Arg118, and Arg151 each bind substrate. Residues Lys201, Glu323, and 353–356 (GGDT) contribute to the ATP site.

Belongs to the phosphoglycerate kinase family. In terms of assembly, monomer.

Its subcellular location is the cytoplasm. It carries out the reaction (2R)-3-phosphoglycerate + ATP = (2R)-3-phospho-glyceroyl phosphate + ADP. Its pathway is carbohydrate degradation; glycolysis; pyruvate from D-glyceraldehyde 3-phosphate: step 2/5. This Azorhizobium caulinodans (strain ATCC 43989 / DSM 5975 / JCM 20966 / LMG 6465 / NBRC 14845 / NCIMB 13405 / ORS 571) protein is Phosphoglycerate kinase.